A 372-amino-acid chain; its full sequence is GDP-mannose 4,6-dehydratase (372 aa).

NADP(+) is bound by residues 8-13, 63-64, 85-89, and Tyr100; these read GITGQD, DL, and LGAQS. Thr132 is a catalytic residue. Catalysis depends on nucleophile residues Glu134 and Tyr156. Residues Lys160, His186, and Arg191 each coordinate NADP(+).

This sequence belongs to the NAD(P)-dependent epimerase/dehydratase family. GDP-mannose 4,6-dehydratase subfamily. NADP(+) is required as a cofactor.

The catalysed reaction is GDP-alpha-D-mannose = GDP-4-dehydro-alpha-D-rhamnose + H2O. Its pathway is bacterial outer membrane biogenesis; LPS O-antigen biosynthesis. The protein operates within nucleotide-sugar biosynthesis; GDP-L-fucose biosynthesis via de novo pathway; GDP-L-fucose from GDP-alpha-D-mannose: step 1/2. In terms of biological role, catalyzes the conversion of GDP-D-mannose to GDP-4-dehydro-6-deoxy-D-mannose. The protein is GDP-mannose 4,6-dehydratase of Yersinia enterocolitica serotype O:8 / biotype 1B (strain NCTC 13174 / 8081).